A 202-amino-acid polypeptide reads, in one-letter code: MNFLRKIVKNCRDEDTQKPSPVSAPLDDDDLWLPPPEYVPLKELTSKKNMRNFCINGGVKVCSPNGYSFRILRHILKSFDEIYSGNHRMIGLVKVVIGLALSGSPVPEGMNWVYKLRRTFIFQWADSRGPLEGEELEYSQEITWDDDTEFVGLQIRVIAKQCHIQGRIWCINMNPRACQLWSDMSLQTQRSEEDKDSSLLLE.

A PPXY motif motif is present at residues 35-38 (PPEY). The interval 115–151 (KLRRTFIFQWADSRGPLEGEELEYSQEITWDDDTEFV) is essential for glycoprotein binding.

Belongs to the lyssavirus matrix protein family. In terms of assembly, homomultimer. Interacts with nucleoprotein and with the cytoplasmic domain of glycoprotein. Interacts with host ATP6V1A; this interaction plays an important role in virion uncoating after viral entry.

It is found in the virion membrane. The protein localises to the host endomembrane system. Its subcellular location is the host cytoplasm. Plays a major role in assembly, budding and uncoating of virion after membrane fusion. Completely covers the ribonucleoprotein coil and keep it in condensed bullet-shaped form. Inhibits viral transcription and stimulates replication. Plays a major role in early induction of TRAIL-mediated apoptosis in infected neurons. Inhibits the integrated stress response (ISR) in the infected cell by blocking the formation of stress granules. The sequence is that of Matrix protein (M) from Rabies virus (strain ERA) (RABV).